Reading from the N-terminus, the 486-residue chain is Protein nucleotidyltransferase YdiU (486 aa).

Gly90, Gly92, Arg93, Lys113, Asp125, Gly126, Arg176, and Arg183 together coordinate ATP. Catalysis depends on Asp252, which acts as the Proton acceptor. The Mg(2+) site is built by Asn253 and Asp262. Asp262 is an ATP binding site.

It belongs to the SELO family. The cofactor is Mg(2+). Mn(2+) is required as a cofactor.

The enzyme catalyses L-seryl-[protein] + ATP = 3-O-(5'-adenylyl)-L-seryl-[protein] + diphosphate. The catalysed reaction is L-threonyl-[protein] + ATP = 3-O-(5'-adenylyl)-L-threonyl-[protein] + diphosphate. It carries out the reaction L-tyrosyl-[protein] + ATP = O-(5'-adenylyl)-L-tyrosyl-[protein] + diphosphate. It catalyses the reaction L-histidyl-[protein] + UTP = N(tele)-(5'-uridylyl)-L-histidyl-[protein] + diphosphate. The enzyme catalyses L-seryl-[protein] + UTP = O-(5'-uridylyl)-L-seryl-[protein] + diphosphate. The catalysed reaction is L-tyrosyl-[protein] + UTP = O-(5'-uridylyl)-L-tyrosyl-[protein] + diphosphate. In terms of biological role, nucleotidyltransferase involved in the post-translational modification of proteins. It can catalyze the addition of adenosine monophosphate (AMP) or uridine monophosphate (UMP) to a protein, resulting in modifications known as AMPylation and UMPylation. This Pseudomonas aeruginosa (strain ATCC 15692 / DSM 22644 / CIP 104116 / JCM 14847 / LMG 12228 / 1C / PRS 101 / PAO1) protein is Protein nucleotidyltransferase YdiU.